Here is a 300-residue protein sequence, read N- to C-terminus: Putative zinc finger protein 705EP (300 aa).

The KRAB domain maps to 7–78 (VTFEDVAIDF…GREFLQDQNP (72 aa)). A C2H2-type 1; degenerate zinc finger spans residues 172–194 (YQCNLCEKAYTNCFHLRRPKMTH). 2 C2H2-type zinc fingers span residues 200–222 (YTCH…EKTH) and 228–250 (YKCH…ERTH). The C2H2-type 4; degenerate zinc-finger motif lies at 256–278 (YECDNSGKAFSQSSGFRGNKIIH).

This sequence belongs to the krueppel C2H2-type zinc-finger protein family.

The protein localises to the nucleus. Its function is as follows. May be involved in transcriptional regulation. In Homo sapiens (Human), this protein is Putative zinc finger protein 705EP.